The sequence spans 304 residues: Cyclin-dependent kinase 3 (304 aa).

The Protein kinase domain maps to phenylalanine 4–phenylalanine 286. Residues isoleucine 10–valine 18 and lysine 33 each bind ATP. Residue aspartate 127 is the Proton acceptor of the active site.

The protein belongs to the protein kinase superfamily. CMGC Ser/Thr protein kinase family. CDC2/CDKX subfamily. As to quaternary structure, interacts with CABLES1 and ATF1. Binding to CCNC/cyclin-C promotes RB1 phosphorylation. Binds to CABLES2.

The catalysed reaction is L-seryl-[protein] + ATP = O-phospho-L-seryl-[protein] + ADP + H(+). It catalyses the reaction L-threonyl-[protein] + ATP = O-phospho-L-threonyl-[protein] + ADP + H(+). In terms of biological role, serine/threonine-protein kinase that plays a critical role in the control of the eukaryotic cell cycle; involved in G0-G1 and G1-S cell cycle transitions. Interacts with CCNC/cyclin-C during interphase. Phosphorylates histone H1, ATF1, RB1 and CABLES1. ATF1 phosphorylation triggers ATF1 transactivation and transcriptional activities, and promotes cell proliferation and transformation. CDK3/cyclin-C mediated RB1 phosphorylation is required for G0-G1 transition. Promotes G1-S transition probably by contributing to the activation of E2F1, E2F2 and E2F3 in a RB1-independent manner. This Mus musculus (Mouse) protein is Cyclin-dependent kinase 3 (Cdk3).